The following is a 123-amino-acid chain: Ribosome-binding factor A (123 aa).

This sequence belongs to the RbfA family. As to quaternary structure, monomer. Binds 30S ribosomal subunits, but not 50S ribosomal subunits or 70S ribosomes.

It is found in the cytoplasm. In terms of biological role, one of several proteins that assist in the late maturation steps of the functional core of the 30S ribosomal subunit. Associates with free 30S ribosomal subunits (but not with 30S subunits that are part of 70S ribosomes or polysomes). Required for efficient processing of 16S rRNA. May interact with the 5'-terminal helix region of 16S rRNA. This is Ribosome-binding factor A from Cupriavidus metallidurans (strain ATCC 43123 / DSM 2839 / NBRC 102507 / CH34) (Ralstonia metallidurans).